The sequence spans 369 residues: Histidinol-phosphate aminotransferase (369 aa).

At Lys-223 the chain carries N6-(pyridoxal phosphate)lysine.

This sequence belongs to the class-II pyridoxal-phosphate-dependent aminotransferase family. Histidinol-phosphate aminotransferase subfamily. In terms of assembly, homodimer. The cofactor is pyridoxal 5'-phosphate.

The catalysed reaction is L-histidinol phosphate + 2-oxoglutarate = 3-(imidazol-4-yl)-2-oxopropyl phosphate + L-glutamate. The protein operates within amino-acid biosynthesis; L-histidine biosynthesis; L-histidine from 5-phospho-alpha-D-ribose 1-diphosphate: step 7/9. The polypeptide is Histidinol-phosphate aminotransferase (Shouchella clausii (strain KSM-K16) (Alkalihalobacillus clausii)).